The following is a 244-amino-acid chain: Tegument protein UL51 (244 aa).

The S-palmitoyl cysteine; by host moiety is linked to residue Cys9. The segment at 178 to 244 (GVTEAPSLGH…SRAAPCVLGQ (67 aa)) is disordered. Over residues 221–244 (PRPTASPTAPRPGPSRAAPCVLGQ) the composition is skewed to low complexity.

It belongs to the herpesviridae UL51 family. As to quaternary structure, oligomerizes. Interacts with UL7; this interaction mediates UL7 incorporation to virions. Interacts with UL14. In terms of processing, phosphorylated. Post-translationally, palmitoylation is necessary for Golgi localization.

The protein resides in the virion tegument. It localises to the host cytoplasm. Its subcellular location is the host Golgi apparatus. In terms of biological role, plays several roles during the time course of infection, including egress of virus particles from the perinuclear space and secondary envelopment of cytoplasmic capsids that bud into specific trans-Golgi network (TGN)-derived membranes. Plays also an essential role in the maintenance of host cytoplasmic viral assembly center (cVAC) morphology in primary host neuronal cells. This is Tegument protein UL51 from Homo sapiens (Human).